A 238-amino-acid chain; its full sequence is ATP-dependent dethiobiotin synthetase BioD (238 aa).

Position 13 to 18 (13 to 18) interacts with ATP; it reads EIGKTV. Position 17 (threonine 17) interacts with Mg(2+). The active site involves lysine 38. Threonine 42 is a binding site for substrate. Mg(2+) contacts are provided by arginine 59 and glutamate 111. Residues 111 to 114, 175 to 176, and 204 to 206 each bind ATP; these read EGAG, NQ, and PLL.

This sequence belongs to the dethiobiotin synthetase family. As to quaternary structure, homodimer. Mg(2+) is required as a cofactor.

It is found in the cytoplasm. It carries out the reaction (7R,8S)-7,8-diammoniononanoate + CO2 + ATP = (4R,5S)-dethiobiotin + ADP + phosphate + 3 H(+). The protein operates within cofactor biosynthesis; biotin biosynthesis; biotin from 7,8-diaminononanoate: step 1/2. Catalyzes a mechanistically unusual reaction, the ATP-dependent insertion of CO2 between the N7 and N8 nitrogen atoms of 7,8-diaminopelargonic acid (DAPA, also called 7,8-diammoniononanoate) to form a ureido ring. This chain is ATP-dependent dethiobiotin synthetase BioD, found in Geobacillus kaustophilus (strain HTA426).